Consider the following 691-residue polypeptide: Tumor necrosis factor alpha-induced protein 2 (691 aa).

A disordered region spans residues 9-111 (QGFPGQQSVP…KPRPELDGPL (103 aa)). The segment covering 12-31 (PGQQSVPGTLNFAVSPQKPR) has biased composition (polar residues). Over residues 33 to 45 (TSEAESETSMSEA) the composition is skewed to low complexity. Positions 91-107 (QPRLSDLEVQPKPRPEL) are enriched in basic and acidic residues.

Belongs to the SEC6 family.

May play a role as a mediator of inflammation and angiogenesis. This is Tumor necrosis factor alpha-induced protein 2 (Tnfaip2) from Mus musculus (Mouse).